A 187-amino-acid chain; its full sequence is Biogenesis of lysosome-related organelles complex 1 subunit 5 (187 aa).

Positions 1-26 (MSGGGTETPVGCEAAPGGGSKKRDSL) are disordered. The residue at position 2 (serine 2) is an N-acetylserine. Residues 154–186 (NKRAEVDEEHRKAMERLKEQYAEMEKDLAKFST) adopt a coiled-coil conformation.

This sequence belongs to the BLOC1S5 family. Interacts with BLOC1S4, DTNBP1/BLOC1S7 and PI4K2A. Component of the biogenesis of lysosome-related organelles complex 1 (BLOC-1) composed of BLOC1S1, BLOC1S2, BLOC1S3, BLOC1S4, BLOC1S5, BLOC1S6, DTNBP1/BLOC1S7 and SNAPIN/BLOC1S8. Octamer composed of one copy each BLOC1S1, BLOC1S2, BLOC1S3, BLOC1S4, BLOC1S5, BLOC1S6, DTNBP1/BLOC1S7 and SNAPIN/BLOC1S8. The BLOC-1 complex associates with the AP-3 protein complex and membrane protein cargos. Interacts with BLOC1S6.

Functionally, component of the BLOC-1 complex, a complex that is required for normal biogenesis of lysosome-related organelles (LRO), such as platelet dense granules and melanosomes. In concert with the AP-3 complex, the BLOC-1 complex is required to target membrane protein cargos into vesicles assembled at cell bodies for delivery into neurites and nerve terminals. The BLOC-1 complex, in association with SNARE proteins, is also proposed to be involved in neurite extension. Plays a role in intracellular vesicle trafficking. This Homo sapiens (Human) protein is Biogenesis of lysosome-related organelles complex 1 subunit 5.